Here is a 122-residue protein sequence, read N- to C-terminus: Large ribosomal subunit protein uL14 (122 aa).

The protein belongs to the universal ribosomal protein uL14 family. In terms of assembly, part of the 50S ribosomal subunit. Forms a cluster with proteins L3 and L19. In the 70S ribosome, L14 and L19 interact and together make contacts with the 16S rRNA in bridges B5 and B8.

Functionally, binds to 23S rRNA. Forms part of two intersubunit bridges in the 70S ribosome. The chain is Large ribosomal subunit protein uL14 from Shewanella baltica (strain OS223).